The following is a 348-amino-acid chain: N-acetyl-gamma-glutamyl-phosphate reductase (348 aa).

Cys-150 is an active-site residue.

Belongs to the NAGSA dehydrogenase family. Type 1 subfamily.

The protein localises to the cytoplasm. It catalyses the reaction N-acetyl-L-glutamate 5-semialdehyde + phosphate + NADP(+) = N-acetyl-L-glutamyl 5-phosphate + NADPH + H(+). Its pathway is amino-acid biosynthesis; L-arginine biosynthesis; N(2)-acetyl-L-ornithine from L-glutamate: step 3/4. In terms of biological role, catalyzes the NADPH-dependent reduction of N-acetyl-5-glutamyl phosphate to yield N-acetyl-L-glutamate 5-semialdehyde. The chain is N-acetyl-gamma-glutamyl-phosphate reductase from Symbiobacterium thermophilum (strain DSM 24528 / JCM 14929 / IAM 14863 / T).